We begin with the raw amino-acid sequence, 842 residues long: MDIRKAYLDFFASKGHEITPSSPLVPDDATLLFTNAGMVPFKSIFTGEIPRPNPPRKTSCQTCIRAGGKHNDLDNVGYTARHHTFFEMLGNFSFGDYFKEQAIAYAWEFVTEVLKLPKDRLYVTVHENDDEAFNLWQKHIQKERIYKFGDKDNFWQMGDTGPCGPCSEIFYDQGQEHFNSSEDYMGGDGDRFLEIWNLVFMQYERSADGVLSPLPKPSIDTGMGLERVTAIKEGKFSNFDSSLFMPIINEISKLCNKTYVYESGASFRVIADHIRSSVFLLAQGVSFDKEGRGYVLRRILRRALRHGYLLGFKQAFMYKLVDVVCDLMGGHYTYLNEKKDFIKEQIRLEEERFLSTIENGIEIFNEELKNTKEIFSGEVAFKLYDTYGFPLDLTADMLREKNLKVDEEKFELFMNEQKARAKASWKGSGDKTASGDFKNLLEKFGENHFVGYEKAECESKILALLDEDFKEVSTLKDAGWVMLENTPFYATSGGQSADSGFIAKREVLDTQKFFNLNLSFIKAGEELKVNDIVHARIDTEKREQIARHHSATHLLHHALREILGSHVSQAGSLVESNKLRFDFTHHKALNKEELESIEKRVNKMIINSSEAILENMPLEEAKKSGAIALFNEKYQGNVRVLTLGESKELCGGTHVKNTAQIGSFYIVKESGVSAGVRRIEAVVSKAALEFVKNQLEELSKVKDELKNNDILSGIKKLKNEILSLKNELKNSSKTELDSKNIQGVEICVKRIDNGDIKAMIDDFKNKFAKAVILLIQVKDEKITLAAGVKDVPLKAGALVKEAAQILGGNGGGRDDFATAGGKDLSKINEALKQSLETIEKAL.

Zn(2+) contacts are provided by His549, His553, Cys650, and His654.

Belongs to the class-II aminoacyl-tRNA synthetase family. Requires Zn(2+) as cofactor.

Its subcellular location is the cytoplasm. The enzyme catalyses tRNA(Ala) + L-alanine + ATP = L-alanyl-tRNA(Ala) + AMP + diphosphate. Functionally, catalyzes the attachment of alanine to tRNA(Ala) in a two-step reaction: alanine is first activated by ATP to form Ala-AMP and then transferred to the acceptor end of tRNA(Ala). Also edits incorrectly charged Ser-tRNA(Ala) and Gly-tRNA(Ala) via its editing domain. This Campylobacter jejuni subsp. jejuni serotype O:2 (strain ATCC 700819 / NCTC 11168) protein is Alanine--tRNA ligase.